An 874-amino-acid chain; its full sequence is MKTSELRQKFLKFFETKGHTVVRSSSLVPHDDPTLLFTNAGMNQFKDVFLGFDKRPYSRATTAQKCVRAGGKHNDLENVGYTARHHTFFEMMGNFSFGDYFKRDAIHFAWEFLTSPEWLNIPKDKLLATVYAEDDEAYNIWLNEIGMPSERIVRIGDNKGAKYVSDNFWQMGDTGPCGPCSEIFYDHGEEIWGGIPGSPEEDGDRWIEIWNCVFMQFNRDEQGNMNPLPKPSVDTGMGLERMAAVMQHVHSNYEIDLFQDLLKAVARETGAAFSMDEPSLKVIADHIRSCSFLIADGVLPSNEGRGYVLRRIIRRAVRHGYKLGQSKPFFHKLVADLVKEMGGAYPELKEKQAQIEEALKNEESRFAQTLETGMALLENALAKGGKTLDGEIIFKLYDTYGFPYDLTADICRERNIELDEAGFEREMEAQRARARAAQSFKANAQLPYDGQDTEFKGYSERQTESKVLALYKDGEQVNELNEGDSGAVVIDFTPFYAESGGQVGDVGYIFSSENRFEVRDTQKIKAAVFGQFGVQTSGRLKVGDSVTAKVDDEIRNANMRNHSATHLMHKALRDVLGGHVEQKGSLVTAESTRFDISHPQAVTAEEIAEVERRVNEAVLANVAVNAAIMSMEDAQKTGAMMLFGEKYGEEVRVLQMGGFSTELCGGTHVSRTGDIGLFKIISEGGIAAGVRRIEAITGLNALKWAQEQERLVKDIIAETKAQTEKDVLAKIQAGAAHAKALEKELAKAKAELAVHAGAKLLDDAKDLGAAKLVAAQIEADAAALREIVTDLTGKSDNAVILLAAVNDGKVSLCAGVSKPLTGKVKAGDLVKFAAEQVGGKGGGRPDLAQAGGTDAGKLPEMLVSVESWLCQKLS.

His562, His566, Cys664, and His668 together coordinate Zn(2+).

Belongs to the class-II aminoacyl-tRNA synthetase family. Zn(2+) serves as cofactor.

It localises to the cytoplasm. It carries out the reaction tRNA(Ala) + L-alanine + ATP = L-alanyl-tRNA(Ala) + AMP + diphosphate. In terms of biological role, catalyzes the attachment of alanine to tRNA(Ala) in a two-step reaction: alanine is first activated by ATP to form Ala-AMP and then transferred to the acceptor end of tRNA(Ala). Also edits incorrectly charged Ser-tRNA(Ala) and Gly-tRNA(Ala) via its editing domain. This Neisseria meningitidis serogroup C (strain 053442) protein is Alanine--tRNA ligase.